The primary structure comprises 389 residues: Acetoin utilization protein AcuC (389 aa).

This sequence belongs to the histone deacetylase family.

Its pathway is ketone degradation; acetoin degradation. Functionally, role in growth on acetoin or butanediol. Involved in the breakdown of these compounds used as a carbon source. The chain is Acetoin utilization protein AcuC (acuC) from Staphylococcus aureus (strain MSSA476).